A 350-amino-acid polypeptide reads, in one-letter code: Protein-glutamate methylesterase/protein-glutamine glutaminase 1 (350 aa).

Positions 3-121 constitute a Response regulatory domain; the sequence is KVLIVEDSPV…RDYDIRARDL (119 aa). Aspartate 54 bears the 4-aspartylphosphate mark. Residues 148–342 form the CheB-type methylesterase domain; the sequence is PASGEPDIGK…PPEKIARVLV (195 aa). Active-site residues include serine 170, histidine 197, and aspartate 290.

It belongs to the CheB family. Post-translationally, phosphorylated by CheA. Phosphorylation of the N-terminal regulatory domain activates the methylesterase activity.

The protein localises to the cytoplasm. The enzyme catalyses [protein]-L-glutamate 5-O-methyl ester + H2O = L-glutamyl-[protein] + methanol + H(+). The catalysed reaction is L-glutaminyl-[protein] + H2O = L-glutamyl-[protein] + NH4(+). Involved in chemotaxis. Part of a chemotaxis signal transduction system that modulates chemotaxis in response to various stimuli. Catalyzes the demethylation of specific methylglutamate residues introduced into the chemoreceptors (methyl-accepting chemotaxis proteins or MCP) by CheR. Also mediates the irreversible deamidation of specific glutamine residues to glutamic acid. This is Protein-glutamate methylesterase/protein-glutamine glutaminase 1 from Syntrophus aciditrophicus (strain SB).